The sequence spans 205 residues: Outer-membrane lipoprotein carrier protein (205 aa).

The N-terminal stretch at 1-21 is a signal peptide; the sequence is MRFLAVATMVVALMVPWSVRA.

It belongs to the LolA family. Monomer.

The protein resides in the periplasm. Functionally, participates in the translocation of lipoproteins from the inner membrane to the outer membrane. Only forms a complex with a lipoprotein if the residue after the N-terminal Cys is not an aspartate (The Asp acts as a targeting signal to indicate that the lipoprotein should stay in the inner membrane). The chain is Outer-membrane lipoprotein carrier protein from Methylobacillus flagellatus (strain ATCC 51484 / DSM 6875 / VKM B-1610 / KT).